Consider the following 321-residue polypeptide: MNKPVKMEPGVKLRDAAKMALIPVKVLPTEKNEMLRKPEWLKIRLPKSTERIEGIKQAMRKHGLHSVCEEASCPNLSECFNHGTATFMILGAICTRRCPFCDVAHGRPLTPDATEPEKLALTIKDMKLSYVVITSVDRDDLRDGGAQHFADCIREIRKHSPNITIEILVPDFRGRMDRALEILIETPPDVFNHNLETAPRLYKLARPGADYKWSLELLRRFKEAHPEIKTKSGLMVGLGEEISEIEEVLRDLRAHNVDMLTVGQYLQPSKHHLPVKRYVPPAEFDALKAYADEIGFTHAASGPFVRSSYHADQQAAGKEVK.

Residues Cys-68, Cys-73, Cys-79, Cys-94, Cys-98, Cys-101, and Ser-308 each contribute to the [4Fe-4S] cluster site. The Radical SAM core domain maps to Phe-80 to Thr-297.

It belongs to the radical SAM superfamily. Lipoyl synthase family. [4Fe-4S] cluster serves as cofactor.

It localises to the cytoplasm. It carries out the reaction [[Fe-S] cluster scaffold protein carrying a second [4Fe-4S](2+) cluster] + N(6)-octanoyl-L-lysyl-[protein] + 2 oxidized [2Fe-2S]-[ferredoxin] + 2 S-adenosyl-L-methionine + 4 H(+) = [[Fe-S] cluster scaffold protein] + N(6)-[(R)-dihydrolipoyl]-L-lysyl-[protein] + 4 Fe(3+) + 2 hydrogen sulfide + 2 5'-deoxyadenosine + 2 L-methionine + 2 reduced [2Fe-2S]-[ferredoxin]. It participates in protein modification; protein lipoylation via endogenous pathway; protein N(6)-(lipoyl)lysine from octanoyl-[acyl-carrier-protein]: step 2/2. Catalyzes the radical-mediated insertion of two sulfur atoms into the C-6 and C-8 positions of the octanoyl moiety bound to the lipoyl domains of lipoate-dependent enzymes, thereby converting the octanoylated domains into lipoylated derivatives. The chain is Lipoyl synthase from Pseudoalteromonas translucida (strain TAC 125).